Consider the following 431-residue polypeptide: Serine hydroxymethyltransferase 2 (431 aa).

Residues Leu131 and 135–137 contribute to the (6S)-5,6,7,8-tetrahydrofolate site; that span reads GHL. N6-(pyridoxal phosphate)lysine is present on Lys240. Glu256 serves as a coordination point for (6S)-5,6,7,8-tetrahydrofolate.

It belongs to the SHMT family. As to quaternary structure, homodimer. Requires pyridoxal 5'-phosphate as cofactor.

It localises to the cytoplasm. It catalyses the reaction (6R)-5,10-methylene-5,6,7,8-tetrahydrofolate + glycine + H2O = (6S)-5,6,7,8-tetrahydrofolate + L-serine. Its pathway is one-carbon metabolism; tetrahydrofolate interconversion. It participates in amino-acid biosynthesis; glycine biosynthesis; glycine from L-serine: step 1/1. Catalyzes the reversible interconversion of serine and glycine with tetrahydrofolate (THF) serving as the one-carbon carrier. This reaction serves as the major source of one-carbon groups required for the biosynthesis of purines, thymidylate, methionine, and other important biomolecules. Also exhibits THF-independent aldolase activity toward beta-hydroxyamino acids, producing glycine and aldehydes, via a retro-aldol mechanism. This is Serine hydroxymethyltransferase 2 from Vibrio vulnificus (strain CMCP6).